A 161-amino-acid polypeptide reads, in one-letter code: Nucleotide-binding protein Sden_0770 (161 aa).

The protein belongs to the YajQ family.

In terms of biological role, nucleotide-binding protein. The polypeptide is Nucleotide-binding protein Sden_0770 (Shewanella denitrificans (strain OS217 / ATCC BAA-1090 / DSM 15013)).